Consider the following 147-residue polypeptide: Allograft inflammatory factor 1 (147 aa).

Residue Ser2 is modified to N-acetylserine. Lys11 is subject to N6-acetyllysine. Ser39 is subject to Phosphoserine. In terms of domain architecture, EF-hand 1 spans 45-80; the sequence is SKLEAFKTKYMEFDLNGNGDIDIMSLKRMLEKLGVP. Ca(2+) contacts are provided by Asp58, Asn60, Asn62, Asp64, Glu98, Thr100, and Asp105. The EF-hand 2; degenerate domain maps to 81–115; that stretch reads KTHLELKKLIREVSSGSEETFSYSDFLRMMLGKRS. Positions 127–147 are disordered; that stretch reads KNKEHQKPTGPPAKKAISELP.

As to quaternary structure, homodimer (Potential). Monomer. Interacts with LCP1. In terms of tissue distribution, cardiac allograft, spleen and testis. Expressed by inflammatory cells (macrophages and neutrophils).

Its subcellular location is the cytoplasm. The protein localises to the cytoskeleton. The protein resides in the cell projection. It localises to the ruffle membrane. It is found in the phagocytic cup. Its function is as follows. Actin-binding protein that enhances membrane ruffling and RAC activation. Enhances the actin-bundling activity of LCP1. Binds calcium. Plays a role in RAC signaling and in phagocytosis. May play an role in macrophage activation and function. Promotes the proliferation of vascular smooth muscle cells and of T-lymphocytes. Enhances lymphocyte migration. Plays a role in vascular inflammation. In Rattus norvegicus (Rat), this protein is Allograft inflammatory factor 1 (Aif1).